Consider the following 297-residue polypeptide: Iron/alpha-ketoglutarate-dependent dioxygenase ausU (297 aa).

Positions 130, 132, and 206 each coordinate Fe cation.

Belongs to the PhyH family. In terms of assembly, homodimer. The cofactor is Fe cation.

It participates in secondary metabolite biosynthesis; terpenoid biosynthesis. Its function is as follows. Iron/alpha-ketoglutarate-dependent dioxygenase; part of the gene cluster that mediates the biosynthesis of calidodehydroaustin, a fungal meroterpenoid. The first step of the pathway is the synthesis of 3,5-dimethylorsellinic acid by the polyketide synthase ausA. 3,5-dimethylorsellinic acid is then prenylated by the polyprenyl transferase ausN. Further epoxidation by the FAD-dependent monooxygenase ausM and cyclization by the probable terpene cyclase ausL lead to the formation of protoaustinoid A. Protoaustinoid A is then oxidized to spiro-lactone preaustinoid A3 by the combined action of the FAD-binding monooxygenases ausB and ausC, and the dioxygenase ausE. Acid-catalyzed keto-rearrangement and ring contraction of the tetraketide portion of preaustinoid A3 by ausJ lead to the formation of preaustinoid A4. The aldo-keto reductase ausK, with the help of ausH, is involved in the next step by transforming preaustinoid A4 into isoaustinone which is in turn hydroxylated by the P450 monooxygenase ausI to form austinolide. The cytochrome P450 monooxygenase ausG modifies austinolide to austinol. Austinol is further acetylated to austin by the O-acetyltransferase ausP, which spontaneously changes to dehydroaustin. The cytochrome P450 monooxygenase ausR then converts dehydroaustin is into 7-dehydrodehydroaustin. The hydroxylation catalyzed by ausR permits the O-acetyltransferase ausQ to add an additional acetyl group to the molecule, leading to the formation of acetoxydehydroaustin. The short chain dehydrogenase ausT catalyzes the reduction of the double bond present between carbon atoms 1 and 2 to convert 7-dehydrodehydroaustin into 1,2-dihydro-7-hydroxydehydroaustin. AusQ catalyzes not only an acetylation reaction but also the addition of the PKS ausV diketide product to 1,2-dihydro-7-hydroxydehydroaustin, forming precalidodehydroaustin. Finally, the iron/alpha-ketoglutarate-dependent dioxygenase converts precalidodehydroaustin into calidodehydroaustin. This Aspergillus calidoustus protein is Iron/alpha-ketoglutarate-dependent dioxygenase ausU.